Here is a 176-residue protein sequence, read N- to C-terminus: Caltractin (176 aa).

Residues 1–27 form a disordered region; that stretch reads MNRAAIAAGKPSGSISTGKPRRKTRAE. EF-hand domains lie at 31 to 66, 67 to 102, 104 to 139, and 140 to 175; these read EMKHEIREAFDLFDADRSGRIDFHELKVAMRALGFD, VKKEEIQRIMNEYDRDQLGEITFQDFEEVMIEKISN, DPTEEILKAFRLFDDDATGRISLKNLRRVAKELSEN, and ISDEELLAMIQEFDRDGDGEIDEEDFIAILRSTSAF. The Ca(2+) site is built by D44, D46, S48, R50, and E55. D153, D155, D157, E159, and D164 together coordinate Ca(2+).

This sequence belongs to the centrin family. In terms of assembly, monomer.

The protein resides in the cytoplasm. Its subcellular location is the cytoskeleton. It is found in the microtubule organizing center. The protein localises to the centrosome. Plays a fundamental role in microtubule-organizing center structure and function. This chain is Caltractin (CAL), found in Giardia intestinalis (Giardia lamblia).